The primary structure comprises 346 residues: tRNA N6-adenosine threonylcarbamoyltransferase (346 aa).

Fe cation is bound by residues histidine 111 and histidine 115. Substrate contacts are provided by residues 134-138 (LVSGG), aspartate 167, glycine 180, and asparagine 279. Aspartate 307 provides a ligand contact to Fe cation.

It belongs to the KAE1 / TsaD family. It depends on Fe(2+) as a cofactor.

The protein localises to the cytoplasm. The catalysed reaction is L-threonylcarbamoyladenylate + adenosine(37) in tRNA = N(6)-L-threonylcarbamoyladenosine(37) in tRNA + AMP + H(+). Functionally, required for the formation of a threonylcarbamoyl group on adenosine at position 37 (t(6)A37) in tRNAs that read codons beginning with adenine. Is involved in the transfer of the threonylcarbamoyl moiety of threonylcarbamoyl-AMP (TC-AMP) to the N6 group of A37, together with TsaE and TsaB. TsaD likely plays a direct catalytic role in this reaction. The polypeptide is tRNA N6-adenosine threonylcarbamoyltransferase (Burkholderia cenocepacia (strain HI2424)).